Reading from the N-terminus, the 272-residue chain is Orotidine 5'-phosphate decarboxylase (272 aa).

The active-site Proton donor is K95.

This sequence belongs to the OMP decarboxylase family. Type 2 subfamily.

It carries out the reaction orotidine 5'-phosphate + H(+) = UMP + CO2. It functions in the pathway pyrimidine metabolism; UMP biosynthesis via de novo pathway; UMP from orotate: step 2/2. The sequence is that of Orotidine 5'-phosphate decarboxylase from Cupriavidus metallidurans (strain ATCC 43123 / DSM 2839 / NBRC 102507 / CH34) (Ralstonia metallidurans).